A 260-amino-acid chain; its full sequence is ELL-associated factor 2 (260 aa).

Residues 17–104 (LKLGESFEKQ…TGECRLEKLS (88 aa)) form a necessary for interaction with ELL region. Positions 116-126 (GSSKIQYRKEQ) are enriched in basic and acidic residues. Disordered regions lie at residues 116-154 (GSSK…SPAS) and 170-234 (MDQM…HNRF). Phosphoserine is present on residues serine 146, serine 151, and serine 154. Positions 174-192 (SSCDSSSDSKSSSSSSSED) are enriched in low complexity. The tract at residues 177-260 (DSSSDSKSSS…LSESGSDSDD (84 aa)) is necessary for transactivation activity. Residues 225-234 (PDIDASHNRF) show a composition bias toward basic and acidic residues. A necessary for interaction with TCEA1 and transactivation activity region spans residues 246-260 (RNDLQLSESGSDSDD).

This sequence belongs to the EAF family. Isoform 1 and isoform 2 interact with TCEA1. Component of the super elongation complex (SEC), at least composed of EAF1, EAF2, CDK9, MLLT3/AF9, AFF (AFF1 or AFF4), the P-TEFb complex and ELL (ELL, ELL2 or ELL3). Interacts with ELL and ELL2. As to expression, expressed in heart, brain, placenta, lung, skeletal muscle, kidney, pancreas, spleen, prostate, testis, small intestine, colon, adrenal, bone marrow, lymph node, spinal gland, stomach, thyroid, trachea, thymus, liver and leukocytes.

It is found in the nucleus speckle. Its function is as follows. Acts as a transcriptional transactivator of TCEA1 elongation activity. Acts as a transcriptional transactivator of ELL and ELL2 elongation activities. Potent inducer of apoptosis in prostatic and non-prostatic cell lines. Inhibits prostate tumor growth in vivo. This Homo sapiens (Human) protein is ELL-associated factor 2 (EAF2).